Here is a 264-residue protein sequence, read N- to C-terminus: Probable metallo-hydrolase YflN (264 aa).

Residues His80, His82, Asp84, His85, His169, Asp188, and His241 each coordinate Zn(2+).

The protein belongs to the metallo-beta-lactamase superfamily. It depends on Zn(2+) as a cofactor.

This is Probable metallo-hydrolase YflN (yflN) from Bacillus subtilis (strain 168).